The chain runs to 231 residues: E3 ubiquitin-protein ligase At3g02290 (231 aa).

The span at 103–118 (GSSHSHEEVEPLRSDS) shows a compositional bias: basic and acidic residues. The interval 103 to 125 (GSSHSHEEVEPLRSDSDADSESF) is disordered. An RING-type; atypical zinc finger spans residues 181-222 (CPTCLEEYTSENPKIVTKCSHHFHLSCIYEWMERSENCPVCG).

Its subcellular location is the cytoplasm. The enzyme catalyses S-ubiquitinyl-[E2 ubiquitin-conjugating enzyme]-L-cysteine + [acceptor protein]-L-lysine = [E2 ubiquitin-conjugating enzyme]-L-cysteine + N(6)-ubiquitinyl-[acceptor protein]-L-lysine.. It functions in the pathway protein modification; protein ubiquitination. Its function is as follows. Mediates E2-dependent protein ubiquitination. This chain is E3 ubiquitin-protein ligase At3g02290, found in Arabidopsis thaliana (Mouse-ear cress).